Consider the following 430-residue polypeptide: 3-phosphoshikimate 1-carboxyvinyltransferase (430 aa).

The 3-phosphoshikimate site is built by K20, S21, and R25. K20 serves as a coordination point for phosphoenolpyruvate. Residues G90 and R118 each contribute to the phosphoenolpyruvate site. 3-phosphoshikimate contacts are provided by S163, S164, Q165, S191, D311, and K338. Q165 lines the phosphoenolpyruvate pocket. D311 acts as the Proton acceptor in catalysis. Positions 342 and 383 each coordinate phosphoenolpyruvate.

This sequence belongs to the EPSP synthase family. In terms of assembly, monomer.

Its subcellular location is the cytoplasm. The catalysed reaction is 3-phosphoshikimate + phosphoenolpyruvate = 5-O-(1-carboxyvinyl)-3-phosphoshikimate + phosphate. The protein operates within metabolic intermediate biosynthesis; chorismate biosynthesis. In terms of biological role, catalyzes the transfer of the enolpyruvyl moiety of phosphoenolpyruvate (PEP) to the 5-hydroxyl of shikimate-3-phosphate (S3P) to produce enolpyruvyl shikimate-3-phosphate and inorganic phosphate. The protein is 3-phosphoshikimate 1-carboxyvinyltransferase of Methanosarcina mazei (strain ATCC BAA-159 / DSM 3647 / Goe1 / Go1 / JCM 11833 / OCM 88) (Methanosarcina frisia).